Here is a 202-residue protein sequence, read N- to C-terminus: Large ribosomal subunit protein bL25 (202 aa).

Belongs to the bacterial ribosomal protein bL25 family. CTC subfamily. Part of the 50S ribosomal subunit; part of the 5S rRNA/L5/L18/L25 subcomplex. Contacts the 5S rRNA. Binds to the 5S rRNA independently of L5 and L18.

This is one of the proteins that binds to the 5S RNA in the ribosome where it forms part of the central protuberance. The chain is Large ribosomal subunit protein bL25 from Burkholderia ambifaria (strain MC40-6).